The following is a 155-amino-acid chain: Cytochrome c-type biogenesis protein CcmE (155 aa).

The Cytoplasmic portion of the chain corresponds to 1 to 8 (MNPVRKKR). The helical; Signal-anchor for type II membrane protein transmembrane segment at 9 to 29 (LFIVLAILAGVGIAVALALSA) threads the bilayer. Residues 30-155 (LQQNINLFYT…YEGGKQEYAK (126 aa)) lie on the Periplasmic side of the membrane. Heme is bound by residues His124 and Tyr128.

This sequence belongs to the CcmE/CycJ family.

It localises to the cell inner membrane. Functionally, heme chaperone required for the biogenesis of c-type cytochromes. Transiently binds heme delivered by CcmC and transfers the heme to apo-cytochromes in a process facilitated by CcmF and CcmH. The protein is Cytochrome c-type biogenesis protein CcmE of Stutzerimonas stutzeri (strain A1501) (Pseudomonas stutzeri).